The sequence spans 262 residues: Phosphatidylglycerol--prolipoprotein diacylglyceryl transferase (262 aa).

The next 4 membrane-spanning stretches (helical) occupy residues Leu-9–Val-29, Ile-41–Ala-61, Ile-80–Val-100, and Leu-109–Leu-129. Arg-131 is an a 1,2-diacyl-sn-glycero-3-phospho-(1'-sn-glycerol) binding site. A run of 3 helical transmembrane segments spans residues Gln-167 to Phe-187, Gly-197 to Met-217, and Gly-226 to Ile-246.

This sequence belongs to the Lgt family.

It localises to the cell membrane. The enzyme catalyses L-cysteinyl-[prolipoprotein] + a 1,2-diacyl-sn-glycero-3-phospho-(1'-sn-glycerol) = an S-1,2-diacyl-sn-glyceryl-L-cysteinyl-[prolipoprotein] + sn-glycerol 1-phosphate + H(+). The protein operates within protein modification; lipoprotein biosynthesis (diacylglyceryl transfer). Functionally, catalyzes the transfer of the diacylglyceryl group from phosphatidylglycerol to the sulfhydryl group of the N-terminal cysteine of a prolipoprotein, the first step in the formation of mature lipoproteins. This chain is Phosphatidylglycerol--prolipoprotein diacylglyceryl transferase, found in Streptococcus pneumoniae serotype 4 (strain ATCC BAA-334 / TIGR4).